The following is a 136-amino-acid chain: ATP synthase epsilon chain (136 aa).

Belongs to the ATPase epsilon chain family. As to quaternary structure, F-type ATPases have 2 components, CF(1) - the catalytic core - and CF(0) - the membrane proton channel. CF(1) has five subunits: alpha(3), beta(3), gamma(1), delta(1), epsilon(1). CF(0) has three main subunits: a, b and c.

The protein resides in the cell membrane. Its function is as follows. Produces ATP from ADP in the presence of a proton gradient across the membrane. In Herpetosiphon aurantiacus (strain ATCC 23779 / DSM 785 / 114-95), this protein is ATP synthase epsilon chain.